A 232-amino-acid chain; its full sequence is tRNA (guanine-N(1)-)-methyltransferase (232 aa).

Residues Gly111 and 131-136 (IGDYIL) each bind S-adenosyl-L-methionine.

The protein belongs to the RNA methyltransferase TrmD family. In terms of assembly, homodimer.

The protein resides in the cytoplasm. It carries out the reaction guanosine(37) in tRNA + S-adenosyl-L-methionine = N(1)-methylguanosine(37) in tRNA + S-adenosyl-L-homocysteine + H(+). In terms of biological role, specifically methylates guanosine-37 in various tRNAs. This is tRNA (guanine-N(1)-)-methyltransferase from Bartonella tribocorum (strain CIP 105476 / IBS 506).